A 232-amino-acid polypeptide reads, in one-letter code: Large ribosomal subunit protein uL1 (232 aa).

It belongs to the universal ribosomal protein uL1 family. Part of the 50S ribosomal subunit.

Functionally, binds directly to 23S rRNA. The L1 stalk is quite mobile in the ribosome, and is involved in E site tRNA release. Its function is as follows. Protein L1 is also a translational repressor protein, it controls the translation of the L11 operon by binding to its mRNA. The polypeptide is Large ribosomal subunit protein uL1 (Thermosipho melanesiensis (strain DSM 12029 / CIP 104789 / BI429)).